A 688-amino-acid polypeptide reads, in one-letter code: Elongation factor G (688 aa).

A tr-type G domain is found at 8–282 (DKFRNFGIMA…GVVDYLPSPL (275 aa)). Residues 17–24 (AHIDAGKT), 81–85 (DTPGH), and 135–138 (NKMD) each bind GTP.

It belongs to the TRAFAC class translation factor GTPase superfamily. Classic translation factor GTPase family. EF-G/EF-2 subfamily.

The protein localises to the cytoplasm. In terms of biological role, catalyzes the GTP-dependent ribosomal translocation step during translation elongation. During this step, the ribosome changes from the pre-translocational (PRE) to the post-translocational (POST) state as the newly formed A-site-bound peptidyl-tRNA and P-site-bound deacylated tRNA move to the P and E sites, respectively. Catalyzes the coordinated movement of the two tRNA molecules, the mRNA and conformational changes in the ribosome. The polypeptide is Elongation factor G (Clostridium botulinum (strain Eklund 17B / Type B)).